The following is an 82-amino-acid chain: Small ribosomal subunit protein bS16 (82 aa).

The protein belongs to the bacterial ribosomal protein bS16 family.

This is Small ribosomal subunit protein bS16 from Yersinia enterocolitica serotype O:8 / biotype 1B (strain NCTC 13174 / 8081).